We begin with the raw amino-acid sequence, 334 residues long: Holliday junction branch migration complex subunit RuvB (334 aa).

The interval 1 to 182 is large ATPase domain (RuvB-L); sequence MDERLVSSEA…FGVMSRLEYY (182 aa). Residues Leu-21, Arg-22, Gly-63, Lys-66, Thr-67, Thr-68, 129-131, Arg-172, Tyr-182, and Arg-219 contribute to the ATP site; that span reads EDF. Thr-67 serves as a coordination point for Mg(2+). Residues 183–253 form a small ATPAse domain (RuvB-S) region; that stretch reads TQEELADIVT…ISQNALERLQ (71 aa). The tract at residues 256-334 is head domain (RuvB-H); sequence RLGLDHIDHK…HFQMEAPRYD (79 aa). DNA-binding residues include Arg-311 and Arg-316.

Belongs to the RuvB family. Homohexamer. Forms an RuvA(8)-RuvB(12)-Holliday junction (HJ) complex. HJ DNA is sandwiched between 2 RuvA tetramers; dsDNA enters through RuvA and exits via RuvB. An RuvB hexamer assembles on each DNA strand where it exits the tetramer. Each RuvB hexamer is contacted by two RuvA subunits (via domain III) on 2 adjacent RuvB subunits; this complex drives branch migration. In the full resolvosome a probable DNA-RuvA(4)-RuvB(12)-RuvC(2) complex forms which resolves the HJ. Homohexamer which interacts with RecU.

It is found in the cytoplasm. The enzyme catalyses ATP + H2O = ADP + phosphate + H(+). Functionally, the RuvA-RuvB-RuvC complex processes Holliday junction (HJ) DNA during genetic recombination and DNA repair, while the RuvA-RuvB complex plays an important role in the rescue of blocked DNA replication forks via replication fork reversal (RFR). RuvA specifically binds to HJ cruciform DNA, conferring on it an open structure. The RuvB hexamer acts as an ATP-dependent pump, pulling dsDNA into and through the RuvAB complex. RuvB forms 2 homohexamers on either side of HJ DNA bound by 1 or 2 RuvA tetramers; 4 subunits per hexamer contact DNA at a time. Coordinated motions by a converter formed by DNA-disengaged RuvB subunits stimulates ATP hydrolysis and nucleotide exchange. Immobilization of the converter enables RuvB to convert the ATP-contained energy into a lever motion, pulling 2 nucleotides of DNA out of the RuvA tetramer per ATP hydrolyzed, thus driving DNA branch migration. The RuvB motors rotate together with the DNA substrate, which together with the progressing nucleotide cycle form the mechanistic basis for DNA recombination by continuous HJ branch migration. Branch migration allows RuvC to scan DNA until it finds its consensus sequence, where it cleaves and resolves cruciform DNA. In Bacillus subtilis (strain 168), this protein is Holliday junction branch migration complex subunit RuvB.